A 179-amino-acid chain; its full sequence is Large ribosomal subunit protein uL5 (179 aa).

The protein belongs to the universal ribosomal protein uL5 family. Part of the 50S ribosomal subunit; part of the 5S rRNA/L5/L18/L25 subcomplex. Contacts the 5S rRNA and the P site tRNA. Forms a bridge to the 30S subunit in the 70S ribosome.

Functionally, this is one of the proteins that bind and probably mediate the attachment of the 5S RNA into the large ribosomal subunit, where it forms part of the central protuberance. In the 70S ribosome it contacts protein S13 of the 30S subunit (bridge B1b), connecting the 2 subunits; this bridge is implicated in subunit movement. Contacts the P site tRNA; the 5S rRNA and some of its associated proteins might help stabilize positioning of ribosome-bound tRNAs. The chain is Large ribosomal subunit protein uL5 from Pseudomonas fluorescens (strain SBW25).